We begin with the raw amino-acid sequence, 155 residues long: Deoxyuridine 5'-triphosphate nucleotidohydrolase (155 aa).

Residues 74 to 76, Asn-87, and 91 to 93 each bind substrate; these read RSG and LID.

The protein belongs to the dUTPase family. Mg(2+) serves as cofactor.

The catalysed reaction is dUTP + H2O = dUMP + diphosphate + H(+). Its pathway is pyrimidine metabolism; dUMP biosynthesis; dUMP from dCTP (dUTP route): step 2/2. This enzyme is involved in nucleotide metabolism: it produces dUMP, the immediate precursor of thymidine nucleotides and it decreases the intracellular concentration of dUTP so that uracil cannot be incorporated into DNA. The polypeptide is Deoxyuridine 5'-triphosphate nucleotidohydrolase (Xanthomonas oryzae pv. oryzae (strain MAFF 311018)).